We begin with the raw amino-acid sequence, 256 residues long: DNA repair protein RecO (256 aa).

Belongs to the RecO family.

In terms of biological role, involved in DNA repair and RecF pathway recombination. The sequence is that of DNA repair protein RecO from Rhizobium leguminosarum bv. trifolii (strain WSM2304).